We begin with the raw amino-acid sequence, 356 residues long: Ubiquitin-conjugating enzyme E2 Z (356 aa).

The segment covering 1–16 (MAESPTEEAATATAGA) has biased composition (low complexity). Positions 1–22 (MAESPTEEAATATAGAGAAGPG) are disordered. The UBC core domain occupies 101 to 255 (QCLLRIKRDI…IRHETIRVAV (155 aa)). The active-site Glycyl thioester intermediate is Cys-190. Residues 334–356 (NAEMDSDSSSSGTETDLHGSLRV) are disordered. Ser-339 is modified (phosphoserine).

Belongs to the ubiquitin-conjugating enzyme family.

It localises to the cytoplasm. Its subcellular location is the nucleus. It catalyses the reaction S-ubiquitinyl-[E1 ubiquitin-activating enzyme]-L-cysteine + [E2 ubiquitin-conjugating enzyme]-L-cysteine = [E1 ubiquitin-activating enzyme]-L-cysteine + S-ubiquitinyl-[E2 ubiquitin-conjugating enzyme]-L-cysteine.. Its pathway is protein modification; protein ubiquitination. Catalyzes the covalent attachment of ubiquitin to other proteins. Specific substrate for UBA6, not charged with ubiquitin by UBE1. May be involved in apoptosis regulation. The chain is Ubiquitin-conjugating enzyme E2 Z (Ube2z) from Rattus norvegicus (Rat).